Reading from the N-terminus, the 451-residue chain is uncharacterized protein (451 aa).

Helical transmembrane passes span 11–31, 56–76, 151–171, 175–195, and 207–227; these read VLLK…YIDL, IQIY…SIGT, IIGI…NIYL, FWLI…LIIF, and VYSV…TIKI. A disordered region spans residues 250–300; that stretch reads TKSNNNNNNNNNNKQDDNIIYDTDSSFNGQSSSSSSSSSSSSSSSSSATTT. 2 stretches are compositionally biased toward low complexity: residues 253-262 and 280-300; these read NNNNNNNNNN and SSSS…ATTT. 2 consecutive transmembrane segments (helical) span residues 392–412 and 413–433; these read FVGV…SDYS and LLTI…LTYL.

Its subcellular location is the membrane. This is an uncharacterized protein from Dictyostelium discoideum (Social amoeba).